The sequence spans 61 residues: Large ribosomal subunit protein uL30 (61 aa).

Belongs to the universal ribosomal protein uL30 family. Part of the 50S ribosomal subunit.

The sequence is that of Large ribosomal subunit protein uL30 from Chlorobium luteolum (strain DSM 273 / BCRC 81028 / 2530) (Pelodictyon luteolum).